Reading from the N-terminus, the 985-residue chain is Protein psiQ (985 aa).

The N-terminal stretch at 1–20 is a signal peptide; that stretch reads MMKYIYILLIFSLLFLKINS. The 146-residue stretch at 102–247 folds into the PA14 domain; sequence QSTTNPNVYA…YDECGVCQGD (146 aa). N-linked (GlcNAc...) asparagine glycosylation is found at Asn127, Asn309, Asn424, Asn491, Asn517, Asn527, Asn592, Asn620, Asn649, Asn696, Asn735, Asn767, Asn786, Asn824, and Asn842.

It belongs to the prespore-cell-inducing factor family.

It localises to the secreted. In Dictyostelium discoideum (Social amoeba), this protein is Protein psiQ (psiQ).